A 314-amino-acid chain; its full sequence is Large ribosomal subunit protein uL10 (314 aa).

The tract at residues 285 to 314 (GAAAGGAAAEEEKEEEEESDEEGGFGDLFG) is disordered. Acidic residues predominate over residues 293-308 (AEEEKEEEEESDEEGG). S303 carries the post-translational modification Phosphoserine; by CK1.

Belongs to the universal ribosomal protein uL10 family. As to quaternary structure, component of the large ribosomal subunit. P0 forms a pentameric complex by interaction with dimers of P1 and P2. Phosphorylated.

Ribosomal protein P0 is the functional equivalent of E.coli protein L10. The chain is Large ribosomal subunit protein uL10 from Podospora anserina (Pleurage anserina).